Consider the following 325-residue polypeptide: MATPLPPPSPRHLRLLRLLLSGLVLGAALRGAAAGHPDVAACPGSLDCALKRRARCPPGAHACGPCLQPFQEDQQGLCVPRMRRPPGGGRPQPRLEDEIDFLAQELARKESGHSTPPLPKDRQRLPEPATLGFSARGQGLELGLPSTPGTPTPTPHTSLGSPVSSDPVHMSPLEPRGGQGDGLALVLILAFCVAGAAALSVASLCWCRLQREIRLTQKADYATAKAPGSPAAPRISPGDQRLAQSAEMYHYQHQRQQMLCLERHKEPPKELDTASSDEENEDGDFTVYECPGLAPTGEMEVRNPLFDHAALSAPLPAPSSPPALP.

The first 34 residues, 1–34 (MATPLPPPSPRHLRLLRLLLSGLVLGAALRGAAA), serve as a signal peptide directing secretion. Residues 138 to 175 (QGLELGLPSTPGTPTPTPHTSLGSPVSSDPVHMSPLEP) form a disordered region. The helical transmembrane segment at 182–202 (GLALVLILAFCVAGAAALSVA) threads the bilayer. At S229 the chain carries Phosphoserine. The disordered stretch occupies residues 266–290 (EPPKELDTASSDEENEDGDFTVYEC). The segment covering 275-284 (SSDEENEDGD) has biased composition (acidic residues).

Belongs to the NPDC1/cab-1 family. As to expression, strongly expressed in adult brain; especially in hippocampus, frontal lobe and temporal lobe.

The protein localises to the membrane. Functionally, suppresses oncogenic transformation in neural and non-neural cells and down-regulates neural cell proliferation. Might be involved in transcriptional regulation. This chain is Neural proliferation differentiation and control protein 1 (NPDC1), found in Homo sapiens (Human).